An 829-amino-acid chain; its full sequence is MSILSRVSDRRPDLSLVSEEDFPYEQDIVRNPGSTKPWLAYIEYKLQKGTVQEQAYIMERACVQLPRSYKLWKMYLRFRTKHVSKLNAAIFASEYQKVNSLFERALILLNKMPRIWEMYLKFLMQQPLVTHTRRTFDRALRALPITQHNRIWALYRPFANSAEGETAVKIWRRYMQVHPEDAEDFIELLVAVGLYTEAVHKYIEILNNPRFTSKNSKGHYELWSEMVDLLVEHATAVETGHETGIDVERIIRSGIERFADQRGKLWCGLATYWIRRGSFERARDVFEEGITTVMTVRDFTLVFDSYTEFEESIISALMEMASTRAEKGEVDEVADFDLDIRMMRFEHLMDRRPFLLNDVLLRQNPNNVTEWEKRVALWGDNKEEVVKTYLDAIEAIQPKKAVGALHQLWTNYAKFYEAGGDLSSARRIMEKAVKVPYKSVAELADMWIEWAEMELRNECFDEAMKVMAKAVQAPKRSTVDYFDETLSPQQRVHKSWKLWSFYVDLVESVSSLDETRKVYERIFELRIATPQTVVNYANLLEEHKYFEESFKIYERGLDLFSYPVAFELWNLYLTKAVDRKISIERLRDLFEQAVEDCPPKFAKVIYLMYGNLEEERGLARHAMRIYERATRAVADEDRADMFNFYITKSASNFGLPSTRPIYERAIAALPDAEARDMCLKFADMEKRLGEIDRARAIYGHASQFCDPRTNPGFWTKWDQFEVQHGNEDTYKEMLRIKRSVQAQYNTDVNFIASQALARSQQKRMEEEAAGNGGGEMDAEVADAMAQLERQARAPVGFVAASEGPKGGSMPVQPVEVHNPDAIDLDEMDE.

12 HAT repeats span residues 15-47, 49-81, 93-125, 127-161, 163-182, 277-312, 380-418, 420-456, 473-505, 544-578, 581-615, and 689-723; these read SLVS…YKLQ, GTVQ…FRTK, SEYQ…FLMQ, PLVT…FANS, EGET…PEDA, GSFE…FEES, DNKE…FYEA, GDLS…MELR, APKR…YVDL, KYFE…KAVD, ISIE…LEEE, and GEID…FEVQ. Residues 799–829 are disordered; sequence AASEGPKGGSMPVQPVEVHNPDAIDLDEMDE.

It belongs to the crooked-neck family. In terms of assembly, associated with the spliceosome.

The protein localises to the nucleus. Its function is as follows. Involved in pre-mRNA splicing and cell cycle progression. In Neurospora crassa (strain ATCC 24698 / 74-OR23-1A / CBS 708.71 / DSM 1257 / FGSC 987), this protein is Pre-mRNA-splicing factor syf1 (msp-41).